The chain runs to 291 residues: Alpha-soluble NSF attachment protein (291 aa).

4 TPR repeats span residues alanine 14 to serine 51, alanine 77 to glutamate 110, alanine 117 to glutamate 150, and histidine 157 to asparagine 190.

This sequence belongs to the SNAP family. Interacts with nsfA and probably SNARE proteins.

It is found in the cytoplasmic vesicle membrane. In terms of biological role, may be required for vesicular transport between the endoplasmic reticulum and the Golgi apparatus. Involved in vesicle fusion with nsfA and probably SNARE proteins. The sequence is that of Alpha-soluble NSF attachment protein (snpA) from Dictyostelium discoideum (Social amoeba).